Here is a 128-residue protein sequence, read N- to C-terminus: Large ribosomal subunit protein bL12 (128 aa).

It belongs to the bacterial ribosomal protein bL12 family. In terms of assembly, homodimer. Part of the ribosomal stalk of the 50S ribosomal subunit. Forms a multimeric L10(L12)X complex, where L10 forms an elongated spine to which 2 to 4 L12 dimers bind in a sequential fashion. Binds GTP-bound translation factors.

Forms part of the ribosomal stalk which helps the ribosome interact with GTP-bound translation factors. Is thus essential for accurate translation. The sequence is that of Large ribosomal subunit protein bL12 from Saccharopolyspora erythraea (strain ATCC 11635 / DSM 40517 / JCM 4748 / NBRC 13426 / NCIMB 8594 / NRRL 2338).